The following is a 521-amino-acid chain: Feruloyl esterase B (521 aa).

The signal sequence occupies residues methionine 1 to alanine 17. Disulfide bonds link cysteine 26-cysteine 72 and cysteine 61-cysteine 111. Residues asparagine 37, asparagine 51, asparagine 77, asparagine 95, asparagine 144, and asparagine 177 are each glycosylated (N-linked (GlcNAc...) asparagine). Intrachain disulfides connect cysteine 184-cysteine 438, cysteine 253-cysteine 270, and cysteine 279-cysteine 288. The Acyl-ester intermediate role is filled by serine 185. Ca(2+) contacts are provided by aspartate 254, aspartate 257, alanine 259, aspartate 261, and isoleucine 263. N-linked (GlcNAc...) asparagine glycans are attached at residues asparagine 284, asparagine 347, asparagine 352, and asparagine 378. Residues aspartate 397 and histidine 437 each act as charge relay system in the active site. Residues asparagine 488 and asparagine 511 are each glycosylated (N-linked (GlcNAc...) asparagine). An intrachain disulfide couples cysteine 498 to cysteine 520.

Belongs to the tannase family. In terms of assembly, homodimer. Post-translationally, glycosylated.

Its subcellular location is the secreted. It catalyses the reaction feruloyl-polysaccharide + H2O = ferulate + polysaccharide.. With respect to regulation, inhibited by the specific serine esterase inhibitor AEBSF. In terms of biological role, involved in degradation of plant cell walls. Hydrolyzes of the feruloyl-arabinose ester bond in arabinoxylans as well as the feruloyl-galactose and feruloyl-arabinose ester bonds in pectin. This chain is Feruloyl esterase B (faeB), found in Aspergillus niger.